The sequence spans 257 residues: S-methyl-5'-thioadenosine phosphorylase (257 aa).

Phosphate contacts are provided by residues Ser-10 and Arg-50–His-51. A disulfide bridge links Cys-130 with Cys-195. Met-180 provides a ligand contact to substrate. A phosphate-binding site is contributed by Thr-181. Residue Asp-204–Asp-206 coordinates substrate. A disulfide bridge connects residues Cys-246 and Cys-248.

This sequence belongs to the PNP/MTAP phosphorylase family. MTAP subfamily. As to quaternary structure, homohexamer. Dimer of a homotrimer.

It catalyses the reaction S-methyl-5'-thioadenosine + phosphate = 5-(methylsulfanyl)-alpha-D-ribose 1-phosphate + adenine. It participates in amino-acid biosynthesis; L-methionine biosynthesis via salvage pathway; S-methyl-5-thio-alpha-D-ribose 1-phosphate from S-methyl-5'-thioadenosine (phosphorylase route): step 1/1. In terms of biological role, catalyzes the reversible phosphorylation of S-methyl-5'-thioadenosine (MTA) to adenine and 5-methylthioribose-1-phosphate. Involved in the breakdown of MTA, a major by-product of polyamine biosynthesis. Responsible for the first step in the methionine salvage pathway after MTA has been generated from S-adenosylmethionine. Has broad substrate specificity with 6-aminopurine nucleosides as preferred substrates. This is S-methyl-5'-thioadenosine phosphorylase from Pyrococcus furiosus (strain ATCC 43587 / DSM 3638 / JCM 8422 / Vc1).